The chain runs to 301 residues: GTPase Era (301 aa).

An Era-type G domain is found at 7-175 (YCGFIAIVGR…AAIVRKHLPE (169 aa)). Residues 15 to 22 (GRPNVGKS) form a G1 region. 15–22 (GRPNVGKS) contacts GTP. The tract at residues 41–45 (QTTRH) is G2. A G3 region spans residues 62 to 65 (DTPG). Residues 62-66 (DTPGL) and 124-127 (NKVD) each bind GTP. The interval 124-127 (NKVD) is G4. Residues 154–156 (ISA) form a G5 region. The region spanning 206 to 283 (LGAELPYSVT…HLELWVKVKS (78 aa)) is the KH type-2 domain.

Belongs to the TRAFAC class TrmE-Era-EngA-EngB-Septin-like GTPase superfamily. Era GTPase family. Monomer.

The protein localises to the cytoplasm. It is found in the cell inner membrane. In terms of biological role, an essential GTPase that binds both GDP and GTP, with rapid nucleotide exchange. Plays a role in 16S rRNA processing and 30S ribosomal subunit biogenesis and possibly also in cell cycle regulation and energy metabolism. This chain is GTPase Era, found in Shigella flexneri.